The sequence spans 456 residues: Bifunctional protein GlmU (456 aa).

The tract at residues 1–229 (MLNSAMSVVI…ISETDGVNNR (229 aa)) is pyrophosphorylase. UDP-N-acetyl-alpha-D-glucosamine-binding positions include 11 to 14 (LAAG), lysine 25, glutamine 76, 81 to 82 (GT), 103 to 105 (YGD), glycine 140, glutamate 154, asparagine 169, and asparagine 227. Aspartate 105 is a Mg(2+) binding site. Asparagine 227 is a Mg(2+) binding site. Residues 230–250 (LQLSRLERIYQAEQAEKLLLS) form a linker region. The segment at 251–456 (GVMLRDPARF…QGWQRPVKKK (206 aa)) is N-acetyltransferase. Positions 333 and 351 each coordinate UDP-N-acetyl-alpha-D-glucosamine. The active-site Proton acceptor is histidine 363. Residues tyrosine 366 and asparagine 377 each contribute to the UDP-N-acetyl-alpha-D-glucosamine site. Residues alanine 380, 386 to 387 (NY), serine 405, alanine 423, and arginine 440 each bind acetyl-CoA.

In the N-terminal section; belongs to the N-acetylglucosamine-1-phosphate uridyltransferase family. The protein in the C-terminal section; belongs to the transferase hexapeptide repeat family. In terms of assembly, homotrimer. Mg(2+) serves as cofactor.

The protein localises to the cytoplasm. The catalysed reaction is alpha-D-glucosamine 1-phosphate + acetyl-CoA = N-acetyl-alpha-D-glucosamine 1-phosphate + CoA + H(+). It carries out the reaction N-acetyl-alpha-D-glucosamine 1-phosphate + UTP + H(+) = UDP-N-acetyl-alpha-D-glucosamine + diphosphate. The protein operates within nucleotide-sugar biosynthesis; UDP-N-acetyl-alpha-D-glucosamine biosynthesis; N-acetyl-alpha-D-glucosamine 1-phosphate from alpha-D-glucosamine 6-phosphate (route II): step 2/2. It functions in the pathway nucleotide-sugar biosynthesis; UDP-N-acetyl-alpha-D-glucosamine biosynthesis; UDP-N-acetyl-alpha-D-glucosamine from N-acetyl-alpha-D-glucosamine 1-phosphate: step 1/1. It participates in bacterial outer membrane biogenesis; LPS lipid A biosynthesis. Catalyzes the last two sequential reactions in the de novo biosynthetic pathway for UDP-N-acetylglucosamine (UDP-GlcNAc). The C-terminal domain catalyzes the transfer of acetyl group from acetyl coenzyme A to glucosamine-1-phosphate (GlcN-1-P) to produce N-acetylglucosamine-1-phosphate (GlcNAc-1-P), which is converted into UDP-GlcNAc by the transfer of uridine 5-monophosphate (from uridine 5-triphosphate), a reaction catalyzed by the N-terminal domain. The chain is Bifunctional protein GlmU from Salmonella paratyphi A (strain ATCC 9150 / SARB42).